We begin with the raw amino-acid sequence, 586 residues long: Arginine--tRNA ligase (586 aa).

Residues 130–140 (ANPTGPMHVGH) carry the 'HIGH' region motif.

The protein belongs to the class-I aminoacyl-tRNA synthetase family. In terms of assembly, monomer.

Its subcellular location is the cytoplasm. The catalysed reaction is tRNA(Arg) + L-arginine + ATP = L-arginyl-tRNA(Arg) + AMP + diphosphate. The protein is Arginine--tRNA ligase of Methylobacterium sp. (strain 4-46).